The primary structure comprises 328 residues: MSFVLILSLVFGGCCSNVISFEHMVQGSNINLGNIVTFTQFVSVTLIQLPNALDFSHFPFRLRPRHIPLKIHMLAVFLFFTSSVANNSVFKFDISVPIHIIIRCSGTTLTMIIGWAVCNKRYSKLQVQSAIIMTLGAIVASLYRDKEFSMDSLKLNTDSVGMTQKSMFGIFVVLVATALMSLLSLLNEWTYNKCGKHWKETLFYSHFLALPLFMLGYTRLRDEFRDLLISSDSMDIPIVKLPIATKLFMLIANNVTQFICIKGVNMLASNTDALTLSVVLLVRKFVSLLLSVYIYKNVLSVTAYLGTITVFLGAGLYSYGSVKTALPR.

The next 10 helical transmembrane spans lie at M1–F21, I30–P50, H66–N86, I98–C118, Y122–L142, S166–L186, W198–T218, L241–I261, L274–I294, and V298–S318.

This sequence belongs to the nucleotide-sugar transporter family. SLC35A subfamily.

The protein resides in the golgi apparatus membrane. Sugar transporter that specifically mediates the transport of UDP-N-acetylglucosamine (UDP-GlcNAc) from the cytosol into Golgi vesicles where glycosyltransferases function. This is UDP-N-acetylglucosamine transporter YEA4 (YEA4) from Kluyveromyces lactis (strain ATCC 8585 / CBS 2359 / DSM 70799 / NBRC 1267 / NRRL Y-1140 / WM37) (Yeast).